A 368-amino-acid polypeptide reads, in one-letter code: MTDNSQIKVIVGMSGGVDSSVSAYLLQQQGYQVEGLFMKNWEEDDTDEYCSASQDLADAKAVCDKLGMKLHTINFAAEYWDNVFEHFLEEYKAGRTPNPDILCNKEIKFKAFLEFAAEELGATYIATGHYVRRDDSTGHPRLLRGLDSNKDQSYFLYTLSEKQVGQSLFPVGDLEKPEVRRIAEQLDLITAKKKDSTGICFIGERKFKDFLAKFLPAQPGPIETVDGKVIGEHQGLMYHTLGQRKGLGIGGRKDATEEAWYVVDKEVERNTLVVAQGEHPRLYSDGLIASQLHWVDRTPIRAPRRCTVKTRYRQQDIPCLIQPIDDETIRVIFDEKQAAVTPGQSAVFYDGEVCLGGGIIEQRFSHPV.

Residues 12-19 (GMSGGVDS) and methionine 38 each bind ATP. Residues 98–100 (NPD) form an interaction with target base in tRNA region. Cysteine 103 functions as the Nucleophile in the catalytic mechanism. Residues cysteine 103 and cysteine 200 are joined by a disulfide bond. Glycine 128 contributes to the ATP binding site. Positions 150–152 (KDQ) are interaction with tRNA. Catalysis depends on cysteine 200, which acts as the Cysteine persulfide intermediate. Positions 311–312 (RY) are interaction with tRNA.

It belongs to the MnmA/TRMU family.

The protein resides in the cytoplasm. It carries out the reaction S-sulfanyl-L-cysteinyl-[protein] + uridine(34) in tRNA + AH2 + ATP = 2-thiouridine(34) in tRNA + L-cysteinyl-[protein] + A + AMP + diphosphate + H(+). Its function is as follows. Catalyzes the 2-thiolation of uridine at the wobble position (U34) of tRNA, leading to the formation of s(2)U34. This is tRNA-specific 2-thiouridylase MnmA from Aeromonas salmonicida (strain A449).